Reading from the N-terminus, the 309-residue chain is Porphobilinogen deaminase (309 aa).

S-(dipyrrolylmethanemethyl)cysteine is present on Cys243.

This sequence belongs to the HMBS family. Monomer. It depends on dipyrromethane as a cofactor.

It carries out the reaction 4 porphobilinogen + H2O = hydroxymethylbilane + 4 NH4(+). Its pathway is porphyrin-containing compound metabolism; protoporphyrin-IX biosynthesis; coproporphyrinogen-III from 5-aminolevulinate: step 2/4. Tetrapolymerization of the monopyrrole PBG into the hydroxymethylbilane pre-uroporphyrinogen in several discrete steps. The polypeptide is Porphobilinogen deaminase (Deinococcus geothermalis (strain DSM 11300 / CIP 105573 / AG-3a)).